We begin with the raw amino-acid sequence, 283 residues long: 4-hydroxy-3-methylbut-2-enyl diphosphate reductase (283 aa).

Cys-12 is a binding site for [4Fe-4S] cluster. The (2E)-4-hydroxy-3-methylbut-2-enyl diphosphate site is built by His-41 and His-74. The dimethylallyl diphosphate site is built by His-41 and His-74. Isopentenyl diphosphate-binding residues include His-41 and His-74. Cys-96 serves as a coordination point for [4Fe-4S] cluster. His-124 lines the (2E)-4-hydroxy-3-methylbut-2-enyl diphosphate pocket. His-124 contacts dimethylallyl diphosphate. His-124 contacts isopentenyl diphosphate. Glu-126 functions as the Proton donor in the catalytic mechanism. Thr-161 is a binding site for (2E)-4-hydroxy-3-methylbut-2-enyl diphosphate. Position 189 (Cys-189) interacts with [4Fe-4S] cluster. Residues Ser-217, Asn-219, and Ser-261 each coordinate (2E)-4-hydroxy-3-methylbut-2-enyl diphosphate. Residues Ser-217, Asn-219, and Ser-261 each coordinate dimethylallyl diphosphate. Residues Ser-217, Asn-219, and Ser-261 each contribute to the isopentenyl diphosphate site.

Belongs to the IspH family. Requires [4Fe-4S] cluster as cofactor.

The catalysed reaction is isopentenyl diphosphate + 2 oxidized [2Fe-2S]-[ferredoxin] + H2O = (2E)-4-hydroxy-3-methylbut-2-enyl diphosphate + 2 reduced [2Fe-2S]-[ferredoxin] + 2 H(+). It catalyses the reaction dimethylallyl diphosphate + 2 oxidized [2Fe-2S]-[ferredoxin] + H2O = (2E)-4-hydroxy-3-methylbut-2-enyl diphosphate + 2 reduced [2Fe-2S]-[ferredoxin] + 2 H(+). The protein operates within isoprenoid biosynthesis; dimethylallyl diphosphate biosynthesis; dimethylallyl diphosphate from (2E)-4-hydroxy-3-methylbutenyl diphosphate: step 1/1. It participates in isoprenoid biosynthesis; isopentenyl diphosphate biosynthesis via DXP pathway; isopentenyl diphosphate from 1-deoxy-D-xylulose 5-phosphate: step 6/6. Its function is as follows. Catalyzes the conversion of 1-hydroxy-2-methyl-2-(E)-butenyl 4-diphosphate (HMBPP) into a mixture of isopentenyl diphosphate (IPP) and dimethylallyl diphosphate (DMAPP). Acts in the terminal step of the DOXP/MEP pathway for isoprenoid precursor biosynthesis. In Anaeromyxobacter sp. (strain Fw109-5), this protein is 4-hydroxy-3-methylbut-2-enyl diphosphate reductase.